The sequence spans 513 residues: ATP synthase subunit alpha (513 aa).

169 to 176 (GDRQTGKT) lines the ATP pocket.

The protein belongs to the ATPase alpha/beta chains family. F-type ATPases have 2 components, CF(1) - the catalytic core - and CF(0) - the membrane proton channel. CF(1) has five subunits: alpha(3), beta(3), gamma(1), delta(1), epsilon(1). CF(0) has three main subunits: a(1), b(2) and c(9-12). The alpha and beta chains form an alternating ring which encloses part of the gamma chain. CF(1) is attached to CF(0) by a central stalk formed by the gamma and epsilon chains, while a peripheral stalk is formed by the delta and b chains.

The protein resides in the cell inner membrane. The enzyme catalyses ATP + H2O + 4 H(+)(in) = ADP + phosphate + 5 H(+)(out). Produces ATP from ADP in the presence of a proton gradient across the membrane. The alpha chain is a regulatory subunit. The chain is ATP synthase subunit alpha from Klebsiella pneumoniae subsp. pneumoniae (strain ATCC 700721 / MGH 78578).